The sequence spans 209 residues: Pyridoxine/pyridoxamine 5'-phosphate oxidase (209 aa).

Substrate contacts are provided by residues arginine 7–tyrosine 10 and lysine 64. Residues arginine 59–lysine 64, phenylalanine 74–threonine 75, and lysine 81 each bind FMN. The substrate site is built by tyrosine 121, arginine 125, and serine 129. FMN contacts are provided by residues glutamine 138–serine 139, tryptophan 182, and arginine 192.

This sequence belongs to the pyridoxamine 5'-phosphate oxidase family. As to quaternary structure, homodimer. Requires FMN as cofactor.

The catalysed reaction is pyridoxamine 5'-phosphate + O2 + H2O = pyridoxal 5'-phosphate + H2O2 + NH4(+). It catalyses the reaction pyridoxine 5'-phosphate + O2 = pyridoxal 5'-phosphate + H2O2. It functions in the pathway cofactor metabolism; pyridoxal 5'-phosphate salvage; pyridoxal 5'-phosphate from pyridoxamine 5'-phosphate: step 1/1. The protein operates within cofactor metabolism; pyridoxal 5'-phosphate salvage; pyridoxal 5'-phosphate from pyridoxine 5'-phosphate: step 1/1. Its function is as follows. Catalyzes the oxidation of either pyridoxine 5'-phosphate (PNP) or pyridoxamine 5'-phosphate (PMP) into pyridoxal 5'-phosphate (PLP). This Haemophilus ducreyi (strain 35000HP / ATCC 700724) protein is Pyridoxine/pyridoxamine 5'-phosphate oxidase.